The chain runs to 370 residues: Lipoyl synthase 1, chloroplastic (370 aa).

Disordered stretches follow at residues 1–25 and 39–67; these read MMQS…PVCR and EAAP…KKPA. Residues 1–37 constitute a chloroplast transit peptide; it reads MMQSSLARPLPRPPIRPACGNPVCRSRPGSVSVARCR. Cysteine 95, cysteine 100, cysteine 106, cysteine 132, cysteine 136, cysteine 139, and serine 347 together coordinate [4Fe-4S] cluster. The region spanning 115-336 is the Radical SAM core domain; that stretch reads GEGDGIATAT…KEYGESVGFR (222 aa).

It belongs to the radical SAM superfamily. Lipoyl synthase family. The cofactor is [4Fe-4S] cluster.

The protein localises to the plastid. It is found in the chloroplast. The catalysed reaction is [[Fe-S] cluster scaffold protein carrying a second [4Fe-4S](2+) cluster] + N(6)-octanoyl-L-lysyl-[protein] + 2 oxidized [2Fe-2S]-[ferredoxin] + 2 S-adenosyl-L-methionine + 4 H(+) = [[Fe-S] cluster scaffold protein] + N(6)-[(R)-dihydrolipoyl]-L-lysyl-[protein] + 4 Fe(3+) + 2 hydrogen sulfide + 2 5'-deoxyadenosine + 2 L-methionine + 2 reduced [2Fe-2S]-[ferredoxin]. The protein operates within protein modification; protein lipoylation via endogenous pathway; protein N(6)-(lipoyl)lysine from octanoyl-[acyl-carrier-protein]: step 2/2. In terms of biological role, catalyzes the radical-mediated insertion of two sulfur atoms into the C-6 and C-8 positions of the octanoyl moiety bound to the lipoyl domains of lipoate-dependent enzymes, thereby converting the octanoylated domains into lipoylated derivatives. This is Lipoyl synthase 1, chloroplastic from Oryza sativa subsp. indica (Rice).